A 156-amino-acid polypeptide reads, in one-letter code: Large ribosomal subunit protein uL15 (156 aa).

The segment at 29–48 (CGKGKTSGRGHKGQKARSGV) is disordered. The segment covering 34–43 (TSGRGHKGQK) has biased composition (basic residues).

Belongs to the universal ribosomal protein uL15 family. In terms of assembly, part of the 50S ribosomal subunit.

Its function is as follows. Binds to the 23S rRNA. The polypeptide is Large ribosomal subunit protein uL15 (Ehrlichia chaffeensis (strain ATCC CRL-10679 / Arkansas)).